Consider the following 245-residue polypeptide: Acetylglutamate kinase (245 aa).

Residues 41-42, Arg-63, and Asn-156 contribute to the substrate site; that span reads GG.

This sequence belongs to the acetylglutamate kinase family. ArgB subfamily.

The protein localises to the cytoplasm. The enzyme catalyses N-acetyl-L-glutamate + ATP = N-acetyl-L-glutamyl 5-phosphate + ADP. It functions in the pathway amino-acid biosynthesis; L-arginine biosynthesis; N(2)-acetyl-L-ornithine from L-glutamate: step 2/4. Its function is as follows. Catalyzes the ATP-dependent phosphorylation of N-acetyl-L-glutamate. This chain is Acetylglutamate kinase, found in Streptococcus sanguinis (strain SK36).